The sequence spans 150 residues: Large ribosomal subunit protein bL9 (150 aa).

This sequence belongs to the bacterial ribosomal protein bL9 family.

Its function is as follows. Binds to the 23S rRNA. The sequence is that of Large ribosomal subunit protein bL9 from Streptococcus equi subsp. zooepidemicus (strain MGCS10565).